The primary structure comprises 1458 residues: Anaphase-promoting complex subunit 1 (1458 aa).

The tract at residues Gln186–Arg210 is disordered. A compositionally biased stretch (basic and acidic residues) spans Arg196 to Arg210. PC repeat units lie at residues Gly873–Ser895, Ala959–Lys982, Gly1006–Ala1024, and Gly1099–Leu1124.

The protein belongs to the APC1 family. In terms of assembly, the APC/C is composed of at least 13 subunits: apc1, apc2, nuc2, apc4, apc5, cut9, apc8, apc10, apc11, hcn1, apc13, apc14 and apc15.

Component of the anaphase-promoting complex/cyclosome (APC/C), a cell cycle-regulated E3 ubiquitin-protein ligase complex that controls progression through mitosis and the G1 phase of the cell cycle. The APC/C is thought to confer substrate specificity and, in the presence of ubiquitin-conjugating E2 enzymes, it catalyzes the formation of protein-ubiquitin conjugates that are subsequently degraded by the 26S proteasome. Mutations to this protein prevent the exit from mitosis. The protein is Anaphase-promoting complex subunit 1 (cut4) of Schizosaccharomyces pombe (strain 972 / ATCC 24843) (Fission yeast).